A 166-amino-acid polypeptide reads, in one-letter code: Crossover junction endodeoxyribonuclease RuvC (166 aa).

Residues aspartate 7, glutamate 67, and aspartate 140 contribute to the active site. Mg(2+)-binding residues include aspartate 7, glutamate 67, and aspartate 140.

The protein belongs to the RuvC family. In terms of assembly, homodimer which binds Holliday junction (HJ) DNA. The HJ becomes 2-fold symmetrical on binding to RuvC with unstacked arms; it has a different conformation from HJ DNA in complex with RuvA. In the full resolvosome a probable DNA-RuvA(4)-RuvB(12)-RuvC(2) complex forms which resolves the HJ. Mg(2+) serves as cofactor.

The protein resides in the cytoplasm. The catalysed reaction is Endonucleolytic cleavage at a junction such as a reciprocal single-stranded crossover between two homologous DNA duplexes (Holliday junction).. In terms of biological role, the RuvA-RuvB-RuvC complex processes Holliday junction (HJ) DNA during genetic recombination and DNA repair. Endonuclease that resolves HJ intermediates. Cleaves cruciform DNA by making single-stranded nicks across the HJ at symmetrical positions within the homologous arms, yielding a 5'-phosphate and a 3'-hydroxyl group; requires a central core of homology in the junction. The consensus cleavage sequence is 5'-(A/T)TT(C/G)-3'. Cleavage occurs on the 3'-side of the TT dinucleotide at the point of strand exchange. HJ branch migration catalyzed by RuvA-RuvB allows RuvC to scan DNA until it finds its consensus sequence, where it cleaves and resolves the cruciform DNA. This Brevibacillus brevis (strain 47 / JCM 6285 / NBRC 100599) protein is Crossover junction endodeoxyribonuclease RuvC.